The primary structure comprises 149 residues: uncharacterized protein (149 aa).

This is an uncharacterized protein from Archaeoglobus fulgidus (strain ATCC 49558 / DSM 4304 / JCM 9628 / NBRC 100126 / VC-16).